A 43-amino-acid chain; its full sequence is Defensin (43 aa).

Disulfide bonds link cysteine 3–cysteine 34, cysteine 20–cysteine 39, and cysteine 24–cysteine 41.

It is found in the secreted. Its function is as follows. Antibacterial peptide. Affects Gram-negative bacteria including methicillin-resistant Staphylococcus aureus. This Trypoxylus dichotomus (Japanese rhinoceros beetle) protein is Defensin.